A 479-amino-acid chain; its full sequence is 6-phosphogluconate dehydrogenase, decarboxylating (479 aa).

NADP(+) contacts are provided by residues 10–15, 33–35, 75–77, and N103; these read GLAVMG, NRS, and IKA. Residues N103 and 129–131 each bind substrate; that span reads SGG. K183 acts as the Proton acceptor in catalysis. 186-187 lines the substrate pocket; sequence HN. E190 serves as the catalytic Proton donor. 5 residues coordinate substrate: Y191, K260, R287, R447, and H453.

The protein belongs to the 6-phosphogluconate dehydrogenase family. In terms of assembly, homodimer.

It catalyses the reaction 6-phospho-D-gluconate + NADP(+) = D-ribulose 5-phosphate + CO2 + NADPH. The protein operates within carbohydrate degradation; pentose phosphate pathway; D-ribulose 5-phosphate from D-glucose 6-phosphate (oxidative stage): step 3/3. Its function is as follows. Catalyzes the oxidative decarboxylation of 6-phosphogluconate to ribulose 5-phosphate and CO(2), with concomitant reduction of NADP to NADPH. The polypeptide is 6-phosphogluconate dehydrogenase, decarboxylating (gnd) (Chlamydia muridarum (strain MoPn / Nigg)).